A 2243-amino-acid polypeptide reads, in one-letter code: MEDQQEENMQQLLNLLPKDQRQIFEIFIQWLNGKSSGPIQLHQNALLTVLQASPYPALQLLQLLHERSKLHIGQIISTLLRQLLDGDVASPRSLCVLANFPASVLEASTLRQKLMTRLVVDSITSEHLMLTMLARSDGQLLDDLLHEQQLTMRAQCSEAAPTKLLVLWLALNEREHFVASVCQHLKDFKCFQDVTLRNNLLILRLANEFALGSQTLEELGCLEKLLAEFDVSAVPEKLQEVHGFFYADFQRLSTLLNFLRPREISKTLRVDALLRAPGVLPLIHENGIHFKHQELHRLIEDTYKWQQLTPALKCHHQEEVEILSYYTALCHVYDVVLDQGEQTTKTKLVQLSVQLRQLHQLGALCSLLEDIFLLVFLRWEQLEPNSQRKGEDGENDEEDDEQYVDDDVASPPRPTAVHSQRTRYGFICRSASLHALFTFLKAFVTKKIHSQDYKSAPEQQGRFQRLVDAISEALWKLGVLQKIEQSLLKSAPSISCLLEPDQLLQLVQLHSTAKKKASSDDESRERSNHASSLNRRKARRQRRAVSFSGGVAGKASADGGLAMEQLRARAQLLSGSGSRKNSSVTSPCERSIIPKMLSTPEQLAIMALALKNFNDVKKIIETFHLEHSQLNRELHFMEQQQLVKQKLSAIYANYQILEGQQANSGETTVEQIKGVAAKGFELSKIISVVDNFSQAHRLQQSPELKALIQRHNTSAQQGFLQQFEERNLNALIICDLIVNLGFNREITSNLLLVIRRQQQQKKGGDEASNTPGSSELGAMNLLQNLCECMRLLERSGQQAALNELLSLKSYPLRPAVLALQLQREAAFQTLYQKEPSEYSHGHELRSNANQFQQLRSRHNYYARFCTYVQQLARLLQLRDPNLEYHTTQLLRNDPYEVIGELIYECGITPLEIEASVAALHLNLVHVIALNICPQLSEEPTKRLPRVVAPQKQESIHNYISQHNQLLAHILLAIQLGSLPDGDADVDFSFLGHLVHLSEVNVLASVYDGNRVLAALNAYKLESARLDQLVTDQEQLLQILLLGMSGQTDSPNRHKSRIDQLIGDLIEKDPRNIHLVVHMGNLGQRAQLLKEHFTRIPSSQQAKELIERTLHHRSAAKSIPTALRSELEHTLSDITIYARVSALLKFESWPQAYDFGRQTPNVIFEQLLQRRRFGLCLEWSRVVYLAGSAGQQRVCLLTLLDALLELRDGEELDESLLGIVEMFPPNPLVNFLDTHKDKFRSLPLLQWVIDYLEGHARDPRLYRNYQLSLEFLRQMDTNERSPFWKLIRHPLLIVEQLVMNARFELLGKLLDAARSKLLKERPLGPCPYCFDKTGHVYDVQSSAGLGSGAGETPAKIRFQLGQTTSEAFILLNFNSYQQDHFVGQDCLDLLLRIYASKALDYHVANVRAASEPSSLGTDVHNSLDSLCGAFVMPKQAPNRQQWTRDEEASHCMCCRRAAFTMLMRRHHCRRCGRVVCYACSTHRIRIPELYDELEVRICNDCAACSTPAKDQGDGTSSERSAISGQVSKSSGRSDSCKWQLSGIITHDKLLREEFSYEHAPSVALSLSILRNHVEQRSCVDLLLFHCRKLEKLIVPNPEVDYGLVAKMINCLAFAAKVRGAPGELENIREHSEIIMAVVQQGCESLIPTGPLNNHNLRKLADALVEAEHWTLALEVHLKCGFATTGVMAAHGLACLRAGCYDAAREKFAHCMTRLSSEQLNSSICKNIFGVASTEAVLLPRKRPQRGPALLQEILQLIAAIPQVQTQPETLHRASLIRSSNTSLASLFTRRREPYVQPRPLQEPALNIMNALAGLKNLAKGQYGGQMPTSEESRRQERGFEESLHYVLTYGSHADILTFLMRREELRAALRYWQHQQLDADLFIHHIFYPQLANGGLNVLMDELQQLDDAQFTAWRLPLLQTCRHLEQQQQLSSLYQLQLLLKDPIRASMTCVKFYALQCENFQKLHANAQHLLSALRHLQGELDMAEWEHLQRQQARRNSVSSTASVRGACFAMQMDARALNGHINTIRRQLEVAKFLDKCEREQPPDEPLRTIQTLKQIRLESSRGTLPTLFEGAADRIQICILILMCGKNIDEGFGLAYGIMQDFKLAALKVFGATAKYLSRNQRLGEVERLLDCIGSNNGGDISTESDEILSIAINAAVHSSAPETKQMLDRLIKRIGSVELRVSSYIYIGQLKSAYLLANKHDRLADIRRILRQAELTGQVHIKKLCDMKLQLSAAPTPL.

Disordered stretches follow at residues 386 to 416 and 514 to 556; these read SQRK…RPTA and KKKA…GKAS. Positions 393–408 are enriched in acidic residues; the sequence is GENDEEDDEQYVDDDV. Residue tyrosine 403 is modified to Phosphotyrosine. A compositionally biased stretch (basic and acidic residues) spans 517–528; the sequence is ASSDDESRERSN. Residues 534–543 show a composition bias toward basic residues; sequence NRRKARRQRR. Residues 617-644 form an LRR 1 repeat; that stretch reads KKIIETFHLEHSQLNRELHFMEQQQLVK. At serine 1424 the chain carries Phosphoserine. The segment at 1444–1500 adopts an FYVE-type zinc-finger fold; the sequence is DEEASHCMCCRRAAFTMLMRRHHCRRCGRVVCYACSTHRIRIPELYDELEVRICNDC. Cysteine 1450, cysteine 1453, cysteine 1467, cysteine 1470, cysteine 1475, cysteine 1478, cysteine 1497, and cysteine 1500 together coordinate Zn(2+). The tract at residues 1505–1534 is disordered; that stretch reads TPAKDQGDGTSSERSAISGQVSKSSGRSDS. The span at 1512-1534 shows a compositional bias: polar residues; it reads DGTSSERSAISGQVSKSSGRSDS. One copy of the LRR 2 repeat lies at 1887–1912; it reads YPQLANGGLNVLMDELQQLDDAQFTA.

This sequence belongs to the ZFYVE26 family.

Phosphatidylinositol 3-phosphate (PtdIns[3]P)-binding protein. Involved in autophagy. The protein is Zinc finger FYVE domain-containing protein 26 homolog of Drosophila melanogaster (Fruit fly).